Reading from the N-terminus, the 243-residue chain is MGKYNLTALQVRKTAIDSIAAGKKGDLPRWVNVVGDIPPAQILVRERPQQHPLVRQRMKTIPGNPTPQPVFQVQTKRVKPKKASRMFLPVEIKYEEDQLRKEFFRDHPWELARPRILVESSGKDSERYNWSRMQQPGKKLDGESVVQRQLWLLNNVPDMTKSRAYDIARREFYRLRLQEDIERRVAVEEAEATGAVFGPSRLEIGMELENQQFEAWKSWAKTEAQIVDQASTSEDGSENQSLP.

Belongs to the mitochondrion-specific ribosomal protein mS23 family. As to quaternary structure, component of the mitochondrial small ribosomal subunit.

The protein localises to the mitochondrion. This Emericella nidulans (strain FGSC A4 / ATCC 38163 / CBS 112.46 / NRRL 194 / M139) (Aspergillus nidulans) protein is Small ribosomal subunit protein mS23 (rsm25).